Consider the following 553-residue polypeptide: Serine/threonine-protein kinase WNG2 (553 aa).

Disordered regions lie at residues 1–20 (MMFP…RLQR) and 88–107 (NREP…GGAE). Residues 1–64 (MMFPAVAAPP…GLSWVSVAVA (64 aa)) form the signal peptide. Residues 125–395 (FKQLRPVDEF…IGEVMEDPFF (271 aa)) enclose the Protein kinase domain. Lysine 186 is a binding site for ATP. The Proton acceptor role is filled by aspartate 278. The interval 432 to 553 (REKADAAAKA…GFNKEDAQES (122 aa)) is disordered. Positions 438-451 (AAKAADNAEVPAAK) are enriched in low complexity. Composition is skewed to basic and acidic residues over residues 465-486 (GDRD…EKGR), 494-524 (EGNH…ENRE), and 531-553 (QREE…AQES).

This sequence belongs to the protein kinase superfamily. STE Ser/Thr protein kinase family. WNG subfamily. The cofactor is Mg(2+).

It is found in the cytoplasmic granule. The protein resides in the secreted. Its subcellular location is the parasitophorous vacuole lumen. The catalysed reaction is L-seryl-[protein] + ATP = O-phospho-L-seryl-[protein] + ADP + H(+). It carries out the reaction L-threonyl-[protein] + ATP = O-phospho-L-threonyl-[protein] + ADP + H(+). Probable serine/threonine-protein kinase. The protein is Serine/threonine-protein kinase WNG2 of Toxoplasma gondii.